Here is a 527-residue protein sequence, read N- to C-terminus: L-aspartate oxidase (527 aa).

Residues 17–20, Lys40, 48–55, and Asp212 contribute to the FAD site; these read TGVA and ATHYAQGG. Residue Arg281 is the Proton donor/acceptor of the active site. Residues Glu364 and 380–381 contribute to the FAD site; that span reads SL.

The protein belongs to the FAD-dependent oxidoreductase 2 family. NadB subfamily. Requires FAD as cofactor.

It is found in the cytoplasm. It catalyses the reaction L-aspartate + O2 = iminosuccinate + H2O2. It functions in the pathway cofactor biosynthesis; NAD(+) biosynthesis; iminoaspartate from L-aspartate (oxidase route): step 1/1. Its function is as follows. Catalyzes the oxidation of L-aspartate to iminoaspartate, the first step in the de novo biosynthesis of NAD(+). This chain is L-aspartate oxidase (nadB), found in Mycobacterium tuberculosis (strain CDC 1551 / Oshkosh).